Here is a 368-residue protein sequence, read N- to C-terminus: Tubby-like F-box protein 2 (368 aa).

The span at 1-17 shows a compositional bias: low complexity; sequence MVPWRRSSSSSSAPSSR. Residues 1-44 are disordered; the sequence is MVPWRRSSSSSSAPSSRPARRPARTNARVSPDVSSELSPLAGEE. The region spanning 49-104 is the F-box domain; that stretch reads ERWSALVPDLLADILRCVEAGSERWPPRRDVVACASVCRRWRDVAVAVVQPPLESG.

Belongs to the TUB family. As to expression, expressed in stems, leaves, flowers and seeds.

This Oryza sativa subsp. japonica (Rice) protein is Tubby-like F-box protein 2 (TULP2).